The primary structure comprises 323 residues: Lipoyl synthase (323 aa).

Positions 65, 70, 76, 91, 95, 98, and 304 each coordinate [4Fe-4S] cluster. Residues 77-293 (FNNGTATFMI…KKEALSIGFT (217 aa)) form the Radical SAM core domain.

This sequence belongs to the radical SAM superfamily. Lipoyl synthase family. Requires [4Fe-4S] cluster as cofactor.

It localises to the cytoplasm. It catalyses the reaction [[Fe-S] cluster scaffold protein carrying a second [4Fe-4S](2+) cluster] + N(6)-octanoyl-L-lysyl-[protein] + 2 oxidized [2Fe-2S]-[ferredoxin] + 2 S-adenosyl-L-methionine + 4 H(+) = [[Fe-S] cluster scaffold protein] + N(6)-[(R)-dihydrolipoyl]-L-lysyl-[protein] + 4 Fe(3+) + 2 hydrogen sulfide + 2 5'-deoxyadenosine + 2 L-methionine + 2 reduced [2Fe-2S]-[ferredoxin]. Its pathway is protein modification; protein lipoylation via endogenous pathway; protein N(6)-(lipoyl)lysine from octanoyl-[acyl-carrier-protein]: step 2/2. Catalyzes the radical-mediated insertion of two sulfur atoms into the C-6 and C-8 positions of the octanoyl moiety bound to the lipoyl domains of lipoate-dependent enzymes, thereby converting the octanoylated domains into lipoylated derivatives. This Buchnera aphidicola subsp. Acyrthosiphon pisum (strain 5A) protein is Lipoyl synthase.